The chain runs to 79 residues: MAAIQVKLVRGLAGCPAAHRTIVAGLGLKKRDSTKILPDTPQTMGMIAKVSYLVEWERVDQPAPEGRKARKAKAAARQG.

Belongs to the universal ribosomal protein uL30 family. As to quaternary structure, part of the 50S ribosomal subunit.

In Anaeromyxobacter sp. (strain Fw109-5), this protein is Large ribosomal subunit protein uL30.